A 432-amino-acid polypeptide reads, in one-letter code: Phosphomethylpyrimidine synthase (432 aa).

Substrate-binding positions include asparagine 66, methionine 95, tyrosine 124, histidine 163, 185 to 187, 226 to 229, and glutamate 265; these read SRG and DGMR. Residue histidine 269 participates in Zn(2+) binding. Tyrosine 292 is a binding site for substrate. Zn(2+) is bound at residue histidine 333. Positions 409, 412, and 416 each coordinate [4Fe-4S] cluster.

It belongs to the ThiC family. [4Fe-4S] cluster serves as cofactor.

It catalyses the reaction 5-amino-1-(5-phospho-beta-D-ribosyl)imidazole + S-adenosyl-L-methionine = 4-amino-2-methyl-5-(phosphooxymethyl)pyrimidine + CO + 5'-deoxyadenosine + formate + L-methionine + 3 H(+). It functions in the pathway cofactor biosynthesis; thiamine diphosphate biosynthesis. Catalyzes the synthesis of the hydroxymethylpyrimidine phosphate (HMP-P) moiety of thiamine from aminoimidazole ribotide (AIR) in a radical S-adenosyl-L-methionine (SAM)-dependent reaction. In Desulforudis audaxviator (strain MP104C), this protein is Phosphomethylpyrimidine synthase.